We begin with the raw amino-acid sequence, 199 residues long: Early activation antigen CD69 (199 aa).

The disordered stretch occupies residues 1 to 29; it reads MSSENCFVAENSSLHPESGQENDATSPHF. Residues 1–40 lie on the Cytoplasmic side of the membrane; that stretch reads MSSENCFVAENSSLHPESGQENDATSPHFSTRHEGSFQVP. The helical; Signal-anchor for type II membrane protein transmembrane segment at 41 to 61 threads the bilayer; that stretch reads VLCAVMNVVFITILIIALIAL. The Extracellular portion of the chain corresponds to 62 to 199; that stretch reads SVGQYNCPGQ…LYWICNKPYK (138 aa). Intrachain disulfides connect cysteine 85–cysteine 96, cysteine 113–cysteine 194, and cysteine 173–cysteine 186. Positions 92–195 constitute a C-type lectin domain; it reads YQRKCYFIST…CEKNLYWICN (104 aa). A glycan (N-linked (GlcNAc...) asparagine) is linked at asparagine 166.

Homodimer; disulfide-linked. Interacts with S100A8 and S100A9. Interacts with galactin-1/LGALS1. Interacts with S1PR1; this interaction mediates S1PR1 degradation. Constitutive Ser/Thr phosphorylation in both mature thymocytes and activated T-lymphocytes. In terms of tissue distribution, expressed on the surface of activated T-cells, B-cells, natural killer cells, neutrophils, eosinophils, epidermal Langerhans cells and platelets.

Its subcellular location is the cell membrane. Transmembrane protein expressed mainly on T-cells resident in mucosa that plays an essential role in immune cell homeostasis. Rapidly expressed on the surface of platelets, T-lymphocytes and NK cells upon activation by various stimuli, such as antigen recognition or cytokine signaling, stimulates different signaling pathways in different cell types. Negatively regulates Th17 cell differentiation through its carbohydrate dependent interaction with galectin-1/LGALS1 present on immature dendritic cells. Association of CD69 cytoplasmic tail with the JAK3/STAT5 signaling pathway regulates the transcription of RORgamma/RORC and, consequently, differentiation toward the Th17 lineage. Also acts via the S100A8/S100A9 complex present on peripheral blood mononuclear cells to promote the conversion of naive CD4 T-cells into regulatory T-cells. Acts as an oxidized low-density lipoprotein (oxLDL) receptor in CD4 T-lymphocytes and negatively regulates the inflammatory response by inducing the expression of PDCD1 through the activation of NFAT. Participates in adipose tissue-derived mesenchymal stem cells (ASCs)-mediated protection against P.aeruginosa infection. Mechanistically, specifically recognizes P.aeruginosa to promote ERK1 activation, followed by granulocyte-macrophage colony-stimulating factor (GM-CSF) and other inflammatory cytokines secretion. In eosinophils, induces IL-10 production through the ERK1/2 pathway. Negatively regulates the chemotactic responses of effector lymphocytes and dendritic cells (DCs) to sphingosine 1 phosphate/S1P by acting as a S1PR1 receptor agonist and facilitating the internalization and degradation of the receptor. The chain is Early activation antigen CD69 (CD69) from Homo sapiens (Human).